The sequence spans 401 residues: L-methionine gamma-lyase (401 aa).

Pyridoxal 5'-phosphate contacts are provided by residues 59 to 61 (YTR) and 89 to 90 (GI). Tyr114 is a substrate binding site. Residue 210–212 (SAT) coordinates pyridoxal 5'-phosphate. N6-(pyridoxal phosphate)lysine is present on Lys213. Arg377 contributes to the substrate binding site.

Belongs to the trans-sulfuration enzymes family. L-methionine gamma-lyase subfamily. As to quaternary structure, homotetramer; dimer of active dimers. Requires pyridoxal 5'-phosphate as cofactor.

It catalyses the reaction L-methionine + H2O = methanethiol + 2-oxobutanoate + NH4(+). It carries out the reaction L-homocysteine + H2O = 2-oxobutanoate + hydrogen sulfide + NH4(+) + H(+). Catalyzes the alpha,gamma-elimination of L-methionine to produce methanethiol, 2-oxobutanoate and ammonia; methanethiol (methyl mercaptan) is considered to be one of the main causes of the oral malodor associated with periodontitis and may also play a role in the pathogenicity of T.denticola. Also displays homocysteine desulfhydrase activity, degrading homocysteine to produce hydrogen sulfide, 2-oxobutanoate and ammonia. The polypeptide is L-methionine gamma-lyase (Treponema denticola (strain ATCC 35405 / DSM 14222 / CIP 103919 / JCM 8153 / KCTC 15104)).